The chain runs to 120 residues: Ribonuclease P protein component 4 (120 aa).

4 residues coordinate Zn(2+): Cys67, Cys70, Cys96, and Cys99.

The protein belongs to the eukaryotic/archaeal RNase P protein component 4 family. In terms of assembly, consists of a catalytic RNA component and at least 4-5 protein subunits. It depends on Zn(2+) as a cofactor.

The protein resides in the cytoplasm. The catalysed reaction is Endonucleolytic cleavage of RNA, removing 5'-extranucleotides from tRNA precursor.. Functionally, part of ribonuclease P, a protein complex that generates mature tRNA molecules by cleaving their 5'-ends. The sequence is that of Ribonuclease P protein component 4 from Thermococcus sibiricus (strain DSM 12597 / MM 739).